We begin with the raw amino-acid sequence, 226 residues long: Urease accessory protein UreF (226 aa).

This sequence belongs to the UreF family. In terms of assembly, ureD, UreF and UreG form a complex that acts as a GTP-hydrolysis-dependent molecular chaperone, activating the urease apoprotein by helping to assemble the nickel containing metallocenter of UreC. The UreE protein probably delivers the nickel.

It is found in the cytoplasm. Functionally, required for maturation of urease via the functional incorporation of the urease nickel metallocenter. This is Urease accessory protein UreF from Burkholderia lata (strain ATCC 17760 / DSM 23089 / LMG 22485 / NCIMB 9086 / R18194 / 383).